Reading from the N-terminus, the 85-residue chain is Large ribosomal subunit protein bL31B (85 aa).

This sequence belongs to the bacterial ribosomal protein bL31 family. Type B subfamily. In terms of assembly, part of the 50S ribosomal subunit.

In Vibrio cholerae serotype O1 (strain ATCC 39541 / Classical Ogawa 395 / O395), this protein is Large ribosomal subunit protein bL31B.